A 555-amino-acid polypeptide reads, in one-letter code: Splicing factor U2af large subunit A (555 aa).

The tract at residues 1–165 (MRDYEGNGVD…ISGFDMAPPT (165 aa)) is disordered. 2 stretches are compositionally biased toward basic and acidic residues: residues 23-81 (ISRD…EKDR) and 90-127 (RDRS…DRED). The span at 143-155 (SKSRSRSPSKSKR) shows a compositional bias: basic residues. 3 consecutive RRM domains span residues 221-304 (RRVY…RPSD), 341-419 (DRIF…RANQ), and 460-546 (EVVT…YPEN).

This sequence belongs to the splicing factor SR family. As to expression, expressed in stems, leaves and apical buds.

The protein localises to the nucleus. Its function is as follows. Necessary for the splicing of pre-mRNA. Binds to the U -enriched regions of plant introns. This is Splicing factor U2af large subunit A (U2AF65A) from Nicotiana plumbaginifolia (Leadwort-leaved tobacco).